A 154-amino-acid polypeptide reads, in one-letter code: 3-hydroxyacyl-[acyl-carrier-protein] dehydratase FabZ (154 aa).

His54 is an active-site residue.

Belongs to the thioester dehydratase family. FabZ subfamily.

Its subcellular location is the cytoplasm. The catalysed reaction is a (3R)-hydroxyacyl-[ACP] = a (2E)-enoyl-[ACP] + H2O. In terms of biological role, involved in unsaturated fatty acids biosynthesis. Catalyzes the dehydration of short chain beta-hydroxyacyl-ACPs and long chain saturated and unsaturated beta-hydroxyacyl-ACPs. The sequence is that of 3-hydroxyacyl-[acyl-carrier-protein] dehydratase FabZ from Shewanella sp. (strain MR-4).